The chain runs to 178 residues: MAKQIYDSMAMKRALTRMTYEIIEKNKGIDDLVLVGIKTRGVYLAQRIADRLKQLENAEVPVGQLDITLYRDDRHDASLAQDPVVNEADLGFDIKDKHVILVDDVLFTGRTIRAALDALMDIGRPKKINLAVLVDRGHRELPIRADFVGKNIPTAMDEQVAVYVDEVDGKDGIELKKL.

The PRPP-binding signature appears at 99-111; that stretch reads VILVDDVLFTGRT.

It belongs to the purine/pyrimidine phosphoribosyltransferase family. PyrR subfamily. As to quaternary structure, homodimer and homohexamer; in equilibrium.

It catalyses the reaction UMP + diphosphate = 5-phospho-alpha-D-ribose 1-diphosphate + uracil. Its function is as follows. Regulates transcriptional attenuation of the pyrimidine nucleotide (pyr) operon by binding in a uridine-dependent manner to specific sites on pyr mRNA. This disrupts an antiterminator hairpin in the RNA and favors formation of a downstream transcription terminator, leading to a reduced expression of downstream genes. In terms of biological role, also displays a weak uracil phosphoribosyltransferase activity which is not physiologically significant. This is Bifunctional protein PyrR from Ligilactobacillus salivarius (strain UCC118) (Lactobacillus salivarius).